Reading from the N-terminus, the 204-residue chain is Auxin-binding protein 4 (204 aa).

An N-terminal signal peptide occupies residues 1–41; the sequence is MVRRRPATGAAPRPHLAAVGRGLLLASVLAAAASSLPVAES. Residues Cys43 and Cys196 are joined by a disulfide bond. Residues His98, His100, and Glu104 each coordinate Zn(2+). Residue Asn136 is glycosylated (N-linked (GlcNAc...) asparagine). His147 provides a ligand contact to Zn(2+). The short motif at 201 to 204 is the Prevents secretion from ER element; sequence KDEL.

As to quaternary structure, homodimer.

It is found in the endoplasmic reticulum lumen. This is probably a receptor for the plant hormone auxin. The sequence is that of Auxin-binding protein 4 (ABP4) from Zea mays (Maize).